The primary structure comprises 211 residues: Thiamine-phosphate synthase (211 aa).

4-amino-2-methyl-5-(diphosphooxymethyl)pyrimidine contacts are provided by residues Gln37–Lys41 and Asn69. Asp70 and Asp89 together coordinate Mg(2+). 4-amino-2-methyl-5-(diphosphooxymethyl)pyrimidine is bound at residue Ser108. Thr134–Thr136 contributes to the 2-[(2R,5Z)-2-carboxy-4-methylthiazol-5(2H)-ylidene]ethyl phosphate binding site. Lys137 is a 4-amino-2-methyl-5-(diphosphooxymethyl)pyrimidine binding site. Residues Gly166 and Val186–Ser187 each bind 2-[(2R,5Z)-2-carboxy-4-methylthiazol-5(2H)-ylidene]ethyl phosphate.

It belongs to the thiamine-phosphate synthase family. Mg(2+) serves as cofactor.

It catalyses the reaction 2-[(2R,5Z)-2-carboxy-4-methylthiazol-5(2H)-ylidene]ethyl phosphate + 4-amino-2-methyl-5-(diphosphooxymethyl)pyrimidine + 2 H(+) = thiamine phosphate + CO2 + diphosphate. The enzyme catalyses 2-(2-carboxy-4-methylthiazol-5-yl)ethyl phosphate + 4-amino-2-methyl-5-(diphosphooxymethyl)pyrimidine + 2 H(+) = thiamine phosphate + CO2 + diphosphate. It carries out the reaction 4-methyl-5-(2-phosphooxyethyl)-thiazole + 4-amino-2-methyl-5-(diphosphooxymethyl)pyrimidine + H(+) = thiamine phosphate + diphosphate. It participates in cofactor biosynthesis; thiamine diphosphate biosynthesis; thiamine phosphate from 4-amino-2-methyl-5-diphosphomethylpyrimidine and 4-methyl-5-(2-phosphoethyl)-thiazole: step 1/1. Condenses 4-methyl-5-(beta-hydroxyethyl)thiazole monophosphate (THZ-P) and 2-methyl-4-amino-5-hydroxymethyl pyrimidine pyrophosphate (HMP-PP) to form thiamine monophosphate (TMP). This is Thiamine-phosphate synthase from Salmonella newport (strain SL254).